We begin with the raw amino-acid sequence, 67 residues long: DNA-directed RNA polymerase subunit omega (67 aa).

It belongs to the RNA polymerase subunit omega family. As to quaternary structure, the RNAP catalytic core consists of 2 alpha, 1 beta, 1 beta' and 1 omega subunit. When a sigma factor is associated with the core the holoenzyme is formed, which can initiate transcription.

The catalysed reaction is RNA(n) + a ribonucleoside 5'-triphosphate = RNA(n+1) + diphosphate. In terms of biological role, promotes RNA polymerase assembly. Latches the N- and C-terminal regions of the beta' subunit thereby facilitating its interaction with the beta and alpha subunits. The sequence is that of DNA-directed RNA polymerase subunit omega from Moorella thermoacetica (strain ATCC 39073 / JCM 9320).